We begin with the raw amino-acid sequence, 572 residues long: DBH-like monooxygenase protein 2 homolog (572 aa).

Positions 1–26 are cleaved as a signal peptide; that stretch reads MGTCLKGNMSVLSLVLFLLSVQQFWA. 4 N-linked (GlcNAc...) asparagine glycosylation sites follow: asparagine 8, asparagine 64, asparagine 187, and asparagine 203. At 27 to 552 the chain is on the extracellular side; it reads QEDPLLPFSE…SPPEPCVRAC (526 aa). Residues 42 to 157 form the DOMON domain; that stretch reads HNVQLKWGFD…LPMKLIYAYG (116 aa). Tyrosine 207 is a catalytic residue. Cystine bridges form between cysteine 209–cysteine 256 and cysteine 244–cysteine 263. Residues histidine 237 and histidine 238 each contribute to the Cu cation site. Histidine 301 serves as a coordination point for Cu cation. Asparagine 306 is a glycosylation site (N-linked (GlcNAc...) asparagine). Cystine bridges form between cysteine 358–cysteine 472 and cysteine 435–cysteine 457. Histidine 381 is an active-site residue. Residues histidine 381, histidine 383, and methionine 456 each coordinate Cu cation. N-linked (GlcNAc...) asparagine glycans are attached at residues asparagine 468, asparagine 503, asparagine 518, and asparagine 534. Residues 553–571 traverse the membrane as a helical segment; it reads ATKNLAFMSLFLCLAGMWA. Position 572 (serine 572) is a topological domain, cytoplasmic.

This sequence belongs to the copper type II ascorbate-dependent monooxygenase family. Requires Cu(2+) as cofactor.

The protein localises to the membrane. The sequence is that of DBH-like monooxygenase protein 2 homolog (moxd2) from Danio rerio (Zebrafish).